We begin with the raw amino-acid sequence, 1104 residues long: Receptor-mediated endocytosis protein 6 (1104 aa).

A Ras-GAP domain is found at 156 to 389 (LKIAQVVCYL…EMMDSLLVEN (234 aa)). Positions 663-682 (SSLAKQPSGMVSSASAQNIP) are disordered. One can recognise a VPS9 domain in the interval 966 to 1104 (QKKDKLLQSV…SAVEYIKTIL (139 aa)).

It belongs to the GAPVD1 family. Interacts with GDP-bound rab-5. Interacts with alpha-adaptin.

The protein resides in the membrane. It is found in the cytoplasmic vesicle. The protein localises to the clathrin-coated vesicle. Functionally, acts both as a GTPase-activating protein (GAP) and a guanine nucleotide exchange factor (GEF), and participates in endocytosis. Acts by regulating the activation of rab-5 by exchanging bound GDP for free GTP at clathrin coated pits. This Caenorhabditis briggsae protein is Receptor-mediated endocytosis protein 6 (rme-6).